The sequence spans 364 residues: NADH-quinone oxidoreductase subunit H (364 aa).

Helical transmembrane passes span 15–35 (LLVL…IAFL), 84–104 (AVFI…WAAI), 123–143 (VGVL…IMGG), 169–189 (IGFV…TTIV), 206–226 (YFPL…SALA), 257–277 (LFML…TILF), 302–322 (LSGL…FALV), and 341–361 (IFLP…TFVG).

It belongs to the complex I subunit 1 family. As to quaternary structure, NDH-1 is composed of 14 different subunits. Subunits NuoA, H, J, K, L, M, N constitute the membrane sector of the complex.

The protein resides in the cell inner membrane. The enzyme catalyses a quinone + NADH + 5 H(+)(in) = a quinol + NAD(+) + 4 H(+)(out). In terms of biological role, NDH-1 shuttles electrons from NADH, via FMN and iron-sulfur (Fe-S) centers, to quinones in the respiratory chain. The immediate electron acceptor for the enzyme in this species is believed to be ubiquinone. Couples the redox reaction to proton translocation (for every two electrons transferred, four hydrogen ions are translocated across the cytoplasmic membrane), and thus conserves the redox energy in a proton gradient. This subunit may bind ubiquinone. This Hyphomonas neptunium (strain ATCC 15444) protein is NADH-quinone oxidoreductase subunit H.